The following is a 549-amino-acid chain: E-selectin (549 aa).

An N-terminal signal peptide occupies residues 1 to 21 (MNASCFLSALTFVLLIGKSIA). Residues 22-139 (WYYNASSELM…CDKKKLALCY (118 aa)) form the C-type lectin domain. At 22–494 (WYYNASSELM…CEAPANPPRP (473 aa)) the chain is on the extracellular side. 2 N-linked (GlcNAc...) asparagine glycosylation sites follow: N25 and N60. 17 disulfide bridges follow: C40–C138, C111–C130, C143–C154, C148–C163, C165–C174, C180–C225, C193–C206, C210–C238, C243–C287, C256–C269, C273–C300, C305–C350, C336–C363, C368–C413, C399–C426, C431–C472, and C458–C485. The Ca(2+) site is built by E101, N103, and E109. Residues 101-109 (EPNNKQRNE), 113-118 (EIYIQR), and 126-128 (NDE) each bind a carbohydrate. Ca(2+) contacts are provided by N126 and D127. One can recognise an EGF-like domain in the interval 140–175 (TASCTNTSCSGHGECVETINSYTCKCHPGFLGPKCD). N145 carries an N-linked (GlcNAc...) asparagine glycan. 5 consecutive Sushi domains span residues 178 to 240 (VTCQ…ACHV), 241 to 302 (VECK…SCKA), 303 to 365 (VTCD…VCKA), 366 to 428 (SQCE…TCAG), and 429 to 487 (VQCS…TCEA). N192 and N203 each carry an N-linked (GlcNAc...) asparagine glycan. N266 carries an N-linked (GlcNAc...) asparagine glycan. N313, N320, and N333 each carry an N-linked (GlcNAc...) asparagine glycan. N-linked (GlcNAc...) asparagine glycans are attached at residues N441 and N465. A helical transmembrane segment spans residues 495 to 516 (LVVALSVAATSLLTLSSLIYVL). Topologically, residues 517-549 (KRFFWKKAKKFVPASSCQSLQSFENYQGPSYII) are cytoplasmic.

Belongs to the selectin/LECAM family. As to quaternary structure, interacts with SELPLG/PSGL1 and PODXL2 through the sialyl Lewis X epitope. SELPLG sulfation appears not to be required for this interaction.

Its subcellular location is the cell membrane. Functionally, cell-surface glycoprotein having a role in immunoadhesion. Mediates in the adhesion of blood neutrophils in cytokine-activated endothelium through interaction with SELPLG/PSGL1. May have a role in capillary morphogenesis. The protein is E-selectin (Sele) of Rattus norvegicus (Rat).